The sequence spans 547 residues: Chaperonin GroEL (547 aa).

ATP contacts are provided by residues 30-33 (TLGP), lysine 51, 87-91 (DGTTT), glycine 415, and aspartate 496.

The protein belongs to the chaperonin (HSP60) family. As to quaternary structure, forms a cylinder of 14 subunits composed of two heptameric rings stacked back-to-back. Interacts with the co-chaperonin GroES.

It is found in the cytoplasm. It catalyses the reaction ATP + H2O + a folded polypeptide = ADP + phosphate + an unfolded polypeptide.. Together with its co-chaperonin GroES, plays an essential role in assisting protein folding. The GroEL-GroES system forms a nano-cage that allows encapsulation of the non-native substrate proteins and provides a physical environment optimized to promote and accelerate protein folding. This Pelodictyon phaeoclathratiforme (strain DSM 5477 / BU-1) protein is Chaperonin GroEL.